Here is a 701-residue protein sequence, read N- to C-terminus: Ephexin-1 (701 aa).

Basic and acidic residues-rich tracts occupy residues methionine 1–lysine 11 and glycine 26–arginine 48. The interval methionine 1–aspartate 141 is disordered. The segment at methionine 1 to lysine 264 is regulatory region; modulates activity toward RHOA, RAC1 and CDC42. Polar residues predominate over residues alanine 120–threonine 132. The residue at position 172 (tyrosine 172) is a Phosphotyrosine. A disordered region spans residues arginine 187–alanine 226. Over residues aspartate 206–proline 218 the composition is skewed to acidic residues. The region spanning lysine 264–glycine 448 is the DH domain. The PH domain maps to tryptophan 480–arginine 592. The SH3 domain maps to leucine 603 to asparagine 664. The span at histidine 679 to lysine 690 shows a compositional bias: basic and acidic residues. A disordered region spans residues histidine 679–glutamine 701. Residues aspartate 691–glutamine 701 are compositionally biased toward basic residues.

In terms of assembly, interacts with CDK5R1 and EPHA4; activated by EPHA4 through the CDK5 kinase. In terms of processing, phosphorylation by CDK5 upon EPHA4 activation by EFNA1 may regulate dendritic spine morphogenesis. Src-dependent phosphorylation at Tyr-172 upon EPHA4 activation increases the guanine exchange factor activity toward RHOA. In terms of tissue distribution, expressed in telencephalic neurons (at protein level). Expressed in brain, spinal cord and testis.

The protein resides in the cytoplasm. It localises to the membrane. Its subcellular location is the cell projection. The protein localises to the growth cone. Its function is as follows. Acts as a guanine nucleotide exchange factor (GEF) which differentially activates the GTPases RHOA, RAC1 and CDC42. Plays a role in axon guidance regulating ephrin-induced growth cone collapse and dendritic spine morphogenesis. Upon activation by ephrin through EPHA4, the GEF activity switches toward RHOA resulting in its activation. Activated RHOA promotes cone retraction at the expense of RAC1- and CDC42-stimulated growth cone extension. This chain is Ephexin-1 (Ngef), found in Rattus norvegicus (Rat).